The sequence spans 2506 residues: MEVLQCDGCDFRAPSYEDLKAHIQDVHTAFLQPTDVAEDNVNELRCGSVNASNQTEVEFSSIKDEFAIAEDLSGQNATSLGTGGYYGHSPGYYGQHIAANPKPTNKFFQCKFCVRYFRSKNLLIEHTRKVHGAQAEGSSSGPPVPGSLNYNIMMHEGFGKVFSCQFCTYKSPRRARIIKHQKMYHKNNLKETTAPPPAPAPMPDPVVPPVSLQDPCKELPAEVVERSILESMVKPLTKSRGNFCCEWCSYQTPRRERWCDHMMKKHRSMVKILSSLRQQQEGTNLPDVPNKSAPSPTSNSTYLTMNAASREIPNTTVSNFRGSMGNSIMRPNSSASKFSPMSYPQMKPKSPHNSGLVNLTERSRYGMTDMTNSSADLETNSMLNDSSSDEELNEIDSENGLSAMDHQTSGLSAEQLMGSDGNKLLETKGIPFRRFMNRFQCPFCPFLTMHRRSISRHIENIHLSGKTAVYKCDECPFTCKSSLKLGAHKQCHTGTTSDWDAVNSQSESISSSLNEGVVSYESSSINGRKSGVMLDPLQQQQPPQPPPPPPPPPPSQPQPLQQPQPPQLQPPHQVPPQPQTQPPPTQQPQPPTQAAPLHPYKCTMCNYSTTTLKGLRVHQQHKHSFCDNLPKFEGQPSSLPLENETDSHPSSSNTVKKSQTSILGLSSKNNFVAKASRKLANDFPLDLSPVKKRTRIDEIASNLQSKINQTKQQEDAVINVEDDEEEEEDNEVEIEVELDREEEPTEPIIEVPTSFSAQQIWVRDTSEPQKEPNFRNITHDYNATNGAEIELTLSEDEEDYYGSSTNLKDHQVSNTALLNTQTPIYGTEHNSENTDFGDSGRLYYCKHCDFNNKSARSVSTHYQRMHPYIKFSFRYILDPNDHSAVYRCLECYIDYTNFEDLQQHYGEHHPEAMNVLNFDHSDLIYRCRFCSYTSPNVRSLMPHYQRMHPTVKINNAMIFSSYVVEQQEGLNTESQTLREILNSAPKNMATSTPVARGGGLPATFNKNTPKTFTPECENQKDPLVNTVVVYDCDVCSFASPNMHSVLVHYQKKHPEEKASYFRIQKTMRMVSVDRGSALSQLSFEVGAPMSPKMSNMGSPPPPQPPPPDLSTELYYCKHCSYSNRSVVGVLVHYQKRHPEIKVTAKYIRQAPPTAAMMRGVEGPQGSPRPPAPIQQLNRSSSERDGPPVENEMFFCQHCDYGNRTVKGVLIHYQKKHRDFKANADVIRQHTATIRSLCDRNQKKPASCVLVSPSNLERDKTKLRALKCRQCSYTSPYFYALRKHIKKDHPALKATVTSIMRWAFLDGLIEAGYHCEWCIYSHTEPNGLLLHYQRRHPEHYVDYTYMATKLWAGPDPSPPSLTMPAEAKTYRCRDCVFEAVSIWDITNHYQAFHPWAMNGDESVLLDIIKEKDAVEKPILSSEELAGPVNCENSIPTPFPEQEAECPEDARLSPEKSLQLASANPAISSTPYQCTVCQSEYNNLHGLLTHYGKKHPGMKVKAADFAQDIDINPGAVYKCRHCPYINTRIHGVLTHYQKRHPSIKVTAEDFVHDVEQSADISQNDVEETSRIFKQGYGAYRCKLCPYTHGTLEKLKIHYEKYHNQPEFDVFSQSPPKLPVPLEPEMTTEVSPSQVSITEEEVGEEPVSTSHFSTSHLVSHTVFRCQLCKYFCSTRKGIARHYRIKHNNVRAQPEGKNNLFKCALCAYTNPIRKGLAAHYQKRHDIDAYYTHCLAASRTISDKPNKVIIPSPPKDDSPQLSEELRRAVEKKKCSLCSFQSFSKKGIVSHYMKRHPGVFPKKQHASKLGGYFTAVYADEHEKPTLMEEEERGNFEKAEVEGEAQEIEWLPFRCIKCFKLSFSTAELLCMHYTDHHSRDLKRDFIILGNGPRLQNSTYQCKHCDSKLQSTAELTSHLNIHNEEFQKRAKRQERRKQLLSKQKYADGAFADFKQERPFGHLEEVPKIKERKVVGYKCKFCVEVHPTLRAICNHLRKHVQYGNVPAVSAAVKGLRSHERSHLALAMFTREDKYSCQYCSFVSAFRHNLDRHMQTHHGHHKPFRCKLCSFKSSYNSRLKTHILKAHAGEHAYKCSWCSFSTMTISQLKEHSLKVHGKALTLPRPRIVSLLSSHSHHSSQKATPAEEVEDSNDSSYSEPPDVQQQLNHYQSAALARNNSRVSPVPLSGAAAGTEQKTEAVLHCEFCEFSSGYIQSIRRHYRDKHGGKKLFKCKDCSFYTGFKSAFTMHVEAGHSAVPEEGPKDLRCPLCLYHTKYKRNMIDHIVLHREERVVPIEVCRSKLSKYLQGVVFRCDKCTFTCSSDESLQQHIEKHNELKPYKCQLCYYETKHTEELDSHLRDEHKVSRNFELVGRVNLDQLEQMKEKMESSSSDDEDKEEEMNSKAEDRELMRFSDHGAALNTEKRFPCEFCGRAFSQGSEWERHVLRHGMALNDTKQVSREEIHPKEIMENSVKMPSIEEKEDDEAIGIDFSLKNETVAICVVTADKSLLENAEAKKE.

3 C2H2-type zinc fingers span residues leucine 4 to histidine 27, phenylalanine 108 to histidine 131, and phenylalanine 162 to histidine 185. A Glycyl lysine isopeptide (Lys-Gly) (interchain with G-Cter in SUMO1); alternate cross-link involves residue lysine 20. A Glycyl lysine isopeptide (Lys-Gly) (interchain with G-Cter in SUMO2); alternate cross-link involves residue lysine 20. The interaction with PBX1 stretch occupies residues proline 215–glycine 241. Glycyl lysine isopeptide (Lys-Gly) (interchain with G-Cter in SUMO2) cross-links involve residues lysine 234 and lysine 271. Positions glutamine 280–asparagine 299 are disordered. Serine 292 and serine 309 each carry an O-linked (GlcNAc6P) serine glycan. Residues lysine 337, lysine 347, and lysine 349 each participate in a glycyl lysine isopeptide (Lys-Gly) (interchain with G-Cter in SUMO2) cross-link. The tract at residues lysine 337–leucine 356 is disordered. Phosphoserine is present on residues serine 350 and serine 354. Residue lysine 428 forms a Glycyl lysine isopeptide (Lys-Gly) (interchain with G-Cter in SUMO2) linkage. 2 consecutive C2H2-type zinc fingers follow at residues phenylalanine 439 to histidine 462 and tyrosine 470 to histidine 492. Lysine 484 is covalently cross-linked (Glycyl lysine isopeptide (Lys-Gly) (interchain with G-Cter in SUMO2)). Positions aspartate 535–proline 596 are disordered. The span at proline 542 to glutamine 593 shows a compositional bias: pro residues. The segment at tyrosine 600–histidine 623 adopts a C2H2-type 6 zinc-finger fold. Residues lysine 631, lysine 657, and lysine 668 each participate in a glycyl lysine isopeptide (Lys-Gly) (interchain with G-Cter in SUMO2) cross-link. A disordered region spans residues proline 636–serine 661. Polar residues predominate over residues histidine 648–serine 661. Position 688 is a phosphoserine (serine 688). Residues lysine 706 and aspartate 849 each participate in a glycyl lysine isopeptide (Lys-Gly) (interchain with G-Cter in SUMO2) cross-link. C2H2-type zinc fingers lie at residues tyrosine 843 to histidine 866, tyrosine 886 to histidine 908, and tyrosine 925 to histidine 948. A Glycyl lysine isopeptide (Lys-Gly) (interchain with G-Cter in SUMO2) cross-link involves residue lysine 986. The C2H2-type 10 zinc finger occupies tyrosine 1030–histidine 1053. At serine 1090 the chain carries Phosphoserine. A Glycyl lysine isopeptide (Lys-Gly) (interchain with G-Cter in SUMO2) cross-link involves residue lysine 1135. Positions methionine 1157–proline 1186 are disordered. A Phosphoserine modification is found at serine 1166. Glycyl lysine isopeptide (Lys-Gly) (interchain with G-Cter in SUMO2) cross-links involve residues lysine 1206, lysine 1214, lysine 1220, and lysine 1243. 2 consecutive C2H2-type zinc fingers follow at residues leucine 1265–histidine 1288 and tyrosine 1470–histidine 1493. A Glycyl lysine isopeptide (Lys-Gly) (interchain with G-Cter in SUMO2) cross-link involves residue lysine 1499. A C2H2-type 13 zinc finger spans residues tyrosine 1515–histidine 1538. Residues lysine 1571 and lysine 1591 each participate in a glycyl lysine isopeptide (Lys-Gly) (interchain with G-Cter in SUMO2) cross-link. 3 consecutive C2H2-type zinc fingers follow at residues tyrosine 1577–histidine 1600, phenylalanine 1660–histidine 1683, and phenylalanine 1697–histidine 1720. Glycyl lysine isopeptide (Lys-Gly) (interchain with G-Cter in SUMO2) cross-links involve residues lysine 1698 and lysine 1780. The C2H2-type 17 zinc finger occupies tyrosine 1892–histidine 1914. Residue lysine 1946 forms a Glycyl lysine isopeptide (Lys-Gly) (interchain with G-Cter in SUMO2) linkage. The segment at tyrosine 1968–glutamine 1992 adopts a C2H2-type 18; degenerate zinc-finger fold. Lysine 2004 carries the N6-methyllysine modification. C2H2-type zinc fingers lie at residues tyrosine 2025 to histidine 2048, phenylalanine 2054 to histidine 2077, and tyrosine 2083 to histidine 2106. Lysine 2104 is covalently cross-linked (Glycyl lysine isopeptide (Lys-Gly) (interchain with G-Cter in SUMO2)). The disordered stretch occupies residues serine 2122–valine 2152. Residues aspartate 2143–valine 2152 are compositionally biased toward polar residues. Residues serine 2172 and serine 2177 each carry the phosphoserine modification. C2H2-type zinc fingers lie at residues leucine 2191 to histidine 2214, phenylalanine 2220 to histidine 2243, and leucine 2254 to histidine 2276. Residue lysine 2293 forms a Glycyl lysine isopeptide (Lys-Gly) (interchain with G-Cter in SUMO2) linkage. 2 C2H2-type zinc fingers span residues phenylalanine 2300 to histidine 2322 and tyrosine 2328 to histidine 2351. Positions methionine 2371–arginine 2396 are disordered. The segment at phenylalanine 2414–histidine 2436 adopts a C2H2-type 27 zinc-finger fold. Glycyl lysine isopeptide (Lys-Gly) (interchain with G-Cter in SUMO2) cross-links involve residues lysine 2444 and lysine 2504.

In terms of assembly, interacts with PBX1; this interaction prevents PBX1-HOXA9 heterodimer from forming and binding to DNA. Post-translationally, O-GlcNAcylated with O-GlcNAc-6-phosphate.

It is found in the nucleus. Functionally, zinc finger nuclear factor involved in transcription by regulating chromatin structure and organization. Involved in the pluripotency and differentiation of embryonic stem cells by regulating SOX2, POU5F1/OCT4, and NANOG. By binding PBX1, prevents the heterodimerization of PBX1 and HOXA9 and their binding to DNA. Regulates neuronal development and neural cell differentiation. This Homo sapiens (Human) protein is Zinc finger protein 462.